Consider the following 315-residue polypeptide: Jacalin-related lectin 10 (315 aa).

A signal peptide spans Met1–Ala23. Jacalin-type lectin domains follow at residues Gln24–Thr165 and Pro168–Pro312.

Belongs to the jacalin lectin family.

This chain is Jacalin-related lectin 10 (JAL10), found in Arabidopsis thaliana (Mouse-ear cress).